Reading from the N-terminus, the 503-residue chain is Cytochrome P450 7A1 (503 aa).

A helical transmembrane segment spans residues 4–24 (ISLIWGIAVLVSCCIWFIVGI). Cys-444 contributes to the heme binding site.

The protein belongs to the cytochrome P450 family. It depends on heme as a cofactor. Detected in liver (at protein level). Liver.

Its subcellular location is the endoplasmic reticulum membrane. The protein resides in the microsome membrane. The enzyme catalyses cholesterol + reduced [NADPH--hemoprotein reductase] + O2 = 7alpha-hydroxycholesterol + oxidized [NADPH--hemoprotein reductase] + H2O + H(+). It catalyses the reaction 4beta-hydroxycholesterol + reduced [NADPH--hemoprotein reductase] + O2 = 4beta,7alpha-dihydroxycholesterol + oxidized [NADPH--hemoprotein reductase] + H2O + H(+). It carries out the reaction lathosterol + reduced [NADPH--hemoprotein reductase] + O2 = 7alpha,8alpha-epoxy-5alpha-cholestan-3beta-ol + oxidized [NADPH--hemoprotein reductase] + H2O + H(+). The catalysed reaction is lathosterol + reduced [NADPH--hemoprotein reductase] + O2 = 5alpha-cholestan-7-oxo-3beta-ol + oxidized [NADPH--hemoprotein reductase] + H2O + H(+). The enzyme catalyses 7-dehydrocholesterol + reduced [NADPH--hemoprotein reductase] + O2 = 7-oxocholesterol + oxidized [NADPH--hemoprotein reductase] + H2O + H(+). It catalyses the reaction (24S)-hydroxycholesterol + reduced [NADPH--hemoprotein reductase] + O2 = (24S)-7alpha-dihydroxycholesterol + oxidized [NADPH--hemoprotein reductase] + H2O + H(+). It carries out the reaction (24R)-hydroxycholesterol + reduced [NADPH--hemoprotein reductase] + O2 = (24R)-7alpha-dihydroxycholesterol + oxidized [NADPH--hemoprotein reductase] + H2O + H(+). The protein operates within lipid metabolism; bile acid biosynthesis. It functions in the pathway steroid metabolism; cholesterol degradation. Its function is as follows. A cytochrome P450 monooxygenase involved in the metabolism of endogenous cholesterol and its oxygenated derivatives (oxysterols). Mechanistically, uses molecular oxygen inserting one oxygen atom into a substrate, and reducing the second into a water molecule, with two electrons provided by NADPH via cytochrome P450 reductase (CPR; NADPH-ferrihemoprotein reductase). Functions as a critical regulatory enzyme of bile acid biosynthesis and cholesterol homeostasis. Catalyzes the hydroxylation of carbon hydrogen bond at 7-alpha position of cholesterol, a rate-limiting step in cholesterol catabolism and bile acid biosynthesis. 7-alpha hydroxylates several oxysterols, including 4beta-hydroxycholesterol and 24-hydroxycholesterol. Catalyzes the oxidation of the 7,8 double bond of 7-dehydrocholesterol and lathosterol with direct and predominant formation of the 7-keto derivatives. The chain is Cytochrome P450 7A1 (Cyp7a1) from Rattus norvegicus (Rat).